A 468-amino-acid chain; its full sequence is Dimethylamine methyltransferase MtbB2 (468 aa).

Residue O356 is a non-standard amino acid, pyrrolysine.

Belongs to the dimethylamine methyltransferase family.

The enzyme catalyses Co(I)-[dimethylamine-specific corrinoid protein] + dimethylamine + H(+) = methyl-Co(III)-[dimethylamine-specific corrinoid protein] + methylamine. Its pathway is one-carbon metabolism; methanogenesis from dimethylamine. In terms of biological role, catalyzes the transfer of a methyl group from dimethylamine to the corrinoid cofactor of MtbC. In Methanosarcina acetivorans (strain ATCC 35395 / DSM 2834 / JCM 12185 / C2A), this protein is Dimethylamine methyltransferase MtbB2 (mtbB2).